Here is a 219-residue protein sequence, read N- to C-terminus: Small ribosomal subunit protein uS3c (219 aa).

One can recognise a KH type-2 domain in the interval 43-118 (IKNYVQKNMK…KLNIAITRIA (76 aa)).

Belongs to the universal ribosomal protein uS3 family. As to quaternary structure, part of the 30S ribosomal subunit.

Its subcellular location is the plastid. It localises to the chloroplast. The chain is Small ribosomal subunit protein uS3c (rps3) from Panax ginseng (Korean ginseng).